Here is a 791-residue protein sequence, read N- to C-terminus: MAYLLQGRLPINQDLLLMQKGTMMRKVRSKSWKKLRFFRLQDDGMTVWHARQAGGRAKPSFSISDVDTVREDHESELLRNLAEEFPLEQGFTIVFHGRRSNLDLVANSVQEAQTWMQGLQLLVGFVTNMDQQERLDQWLSDWFQRGDKNQDGRMSFGEVQRLLHLMNVEMDQEYAFQLFQTADTSQSGTLEGEEFVEFYKSLTQRPEVQELFEKFSSDGQKLTLLEFVDFLQEEQKEGERASDLALELIDRYEPSESGKLRHVLSMDGFLGYLCSKDGDIFNPTCHPLYQDMTQPLNHYYINSSHNTYLVGDQLCGQSSVEGYIRALKRGCRCVEVDIWDGPSGEPIVYHGHTLTSRIPFKDVVAAIGQYAFQTSDYPVILSLENHCSWEQQEIIVRHLTEILGDQLLTTALDGQPPTQLPSPEDLRGKILVKGKKLMLEEEEEEPEAELEAEQEARLDLEAQLESEPQDLSPRSEDKKKVVMCPLLCRPLCCQIMAQAPISKPGLLLFPKQKPKAILCPALSALVVYLKAVTFYSFTHSREHYHFYETSSFSETKAKSLIKEAGDEFVQHNAWQLSRVYPSGLRTDSSNYNPQEFWNAGCQMVAMNMQTAGLEMDLCDGLFRQNAGCGYVLKPDFLRDAQSSFHPERPISPFKAQTLIIQVISGQQLPKVDNTKEQSIVDPLVRVEIFGVRPDTTRQETSYVENNGFNPYWGQTLCFRILVPELALLRFVVKDYDWKSRNDFIGQYTLPWSCMQQGYRHIHLLSKDGLSLHPASIFVHICTQEVSEEAES.

The PH domain maps to 16 to 124; that stretch reads LLMQKGTMMR…WMQGLQLLVG (109 aa). The interval 26-53 is substrate binding; it reads KVRSKSWKKLRFFRLQDDGMTVWHARQA. 3 EF-hand domains span residues 134–169, 170–205, and 207–237; these read RLDQ…MNVE, MDQE…LTQR, and EVQE…EQKE. Asp-147, Asn-149, Asp-151, Arg-153, Glu-158, Asp-183, Ser-185, Ser-187, Thr-189, and Glu-194 together coordinate Ca(2+). A GBA motif is present at residues 213–243; that stretch reads EKFSSDGQKLTLLEFVDFLQEEQKEGERASD. The 146-residue stretch at 290–435 folds into the PI-PLC X-box domain; it reads QDMTQPLNHY…LRGKILVKGK (146 aa). The active site involves His-305. Asn-306, Glu-335, and Asp-337 together coordinate Ca(2+). His-350 is an active-site residue. Glu-384 provides a ligand contact to Ca(2+). The substrate site is built by Lys-433, Lys-435, Ser-551, and Arg-578. The PI-PLC Y-box domain maps to 522–638; that stretch reads LSALVVYLKA…GYVLKPDFLR (117 aa). Residues 638–765 enclose the C2 domain; the sequence is RDAQSSFHPE…QGYRHIHLLS (128 aa). Ile-679, Asp-681, Asn-705, Asp-734, Tyr-735, and Asp-736 together coordinate Ca(2+). Positions 760–763 match the PDZ-binding motif; that stretch reads HIHL.

As to quaternary structure, interacts with GRIP1. Interacts (via GBA motif) with guanine nucleotide-binding protein G(i) alpha subunit GNAI3 (inactive GDP-bound form); low-affinity interaction. Ca(2+) is required as a cofactor.

The protein resides in the membrane. It is found in the nucleus. Its subcellular location is the cytoplasm. It localises to the endoplasmic reticulum. It carries out the reaction a 1,2-diacyl-sn-glycero-3-phospho-(1D-myo-inositol-4,5-bisphosphate) + H2O = 1D-myo-inositol 1,4,5-trisphosphate + a 1,2-diacyl-sn-glycerol + H(+). The catalysed reaction is a 1,2-diacyl-sn-glycero-3-phospho-(1D-myo-inositol) + H2O = 1D-myo-inositol 1-phosphate + a 1,2-diacyl-sn-glycerol + H(+). Functionally, hydrolyzes the phosphatidylinositol 4,5-bisphosphate (PIP2) to generate 2 second messenger molecules diacylglycerol (DAG) and inositol 1,4,5-trisphosphate (IP3). DAG mediates the activation of protein kinase C (PKC), while IP3 releases Ca(2+) from intracellular stores. Required for acrosome reaction in sperm during fertilization, probably by acting as an important enzyme for intracellular Ca(2+) mobilization in the zona pellucida-induced acrosome reaction. May play a role in cell growth. Modulates the liver regeneration in cooperation with nuclear PKC. Overexpression up-regulates the Erk signaling pathway and proliferation. This chain is 1-phosphatidylinositol 4,5-bisphosphate phosphodiesterase delta-4 (PLCD4), found in Bos taurus (Bovine).